We begin with the raw amino-acid sequence, 335 residues long: tRNA N6-adenosine threonylcarbamoyltransferase (335 aa).

Positions 107 and 111 each coordinate Fe cation. Substrate is bound by residues 129–133 (LVSGG), Asp162, Gly175, and Asn268. Residue Asp296 coordinates Fe cation.

It belongs to the KAE1 / TsaD family. Fe(2+) is required as a cofactor.

The protein resides in the cytoplasm. It catalyses the reaction L-threonylcarbamoyladenylate + adenosine(37) in tRNA = N(6)-L-threonylcarbamoyladenosine(37) in tRNA + AMP + H(+). In terms of biological role, required for the formation of a threonylcarbamoyl group on adenosine at position 37 (t(6)A37) in tRNAs that read codons beginning with adenine. Is involved in the transfer of the threonylcarbamoyl moiety of threonylcarbamoyl-AMP (TC-AMP) to the N6 group of A37, together with TsaE and TsaB. TsaD likely plays a direct catalytic role in this reaction. The sequence is that of tRNA N6-adenosine threonylcarbamoyltransferase from Campylobacter fetus subsp. fetus (strain 82-40).